A 442-amino-acid chain; its full sequence is Serine hydroxymethyltransferase (442 aa).

Pyridoxal 5'-phosphate-binding positions include tyrosine 54, 100-102 (SGS), and histidine 236. Residues cysteine 125 and cysteine 364 are joined by a disulfide bond. At lysine 237 the chain carries N6-(pyridoxal phosphate)lysine. Glycine 272 lines the pyridoxal 5'-phosphate pocket.

The protein belongs to the SHMT family. Homodimer. Pyridoxal 5'-phosphate serves as cofactor.

It localises to the cytoplasm. The protein localises to the mitochondrion matrix. The protein resides in the plastid. It is found in the apicoplast. Its subcellular location is the nucleus. It carries out the reaction (6R)-5,10-methylene-5,6,7,8-tetrahydrofolate + glycine + H2O = (6S)-5,6,7,8-tetrahydrofolate + L-serine. Its pathway is one-carbon metabolism; tetrahydrofolate interconversion. Redox regulation; active in reducing conditions, inactive in oxidizing conditions. The reduction of the cysteine pairs allows the access binding of the tetrahydrofolate substrate to its binding site. This mechanism appears to be unique to Plasmodium species. Catalyzes the interconversion of serine to glycine accompanied with the production of 5,10-methylenetetrahydrofolate, a source of one-carbon units used by thymidylate synthase to convert dUMP to dTMP for DNA synthesis. Binds to its own mRNA and to the mRNA of bifunctional dihydrofolate reductase-thymidylate synthase (DHFR-TS) in vitro; the physiological relevance of this interaction is not clear. This chain is Serine hydroxymethyltransferase, found in Plasmodium falciparum (isolate 3D7).